The following is a 273-amino-acid chain: Undecaprenyl-diphosphatase (273 aa).

6 helical membrane passes run 43-63 (IGNVFEVVIQLGAILAVCWEY), 82-102 (KFVLNLLIAFLPAAIVGVLLI), 109-129 (LFNPVAVACALVVGGLVILWA), 185-205 (TEFSFFLAIPIMFAATAYDVL), 214-234 (ADLPTFGTGFLFAFLSAFVAV), and 249-269 (FAWYRIVFGLIILGSWWLGWI).

This sequence belongs to the UppP family.

Its subcellular location is the cell inner membrane. The catalysed reaction is di-trans,octa-cis-undecaprenyl diphosphate + H2O = di-trans,octa-cis-undecaprenyl phosphate + phosphate + H(+). In terms of biological role, catalyzes the dephosphorylation of undecaprenyl diphosphate (UPP). Confers resistance to bacitracin. The sequence is that of Undecaprenyl-diphosphatase from Laribacter hongkongensis (strain HLHK9).